We begin with the raw amino-acid sequence, 680 residues long: Structure-specific endonuclease subunit SLX4 (680 aa).

Disordered regions lie at residues 15 to 92, 141 to 183, and 450 to 490; these read EVAK…EPVV, ESSS…STQQ, and LGSG…ATRL. The segment covering 22–33 has biased composition (acidic residues); sequence DSDEPIIDEDDL. The segment covering 60-86 has biased composition (basic and acidic residues); that stretch reads NNSKDTFKETPLELVDKEEAIEDKAPN. The segment covering 156 to 174 has biased composition (basic residues); it reads LKSKKITKPKLTKTSKRTK. Over residues 473–490 the composition is skewed to polar residues; that stretch reads TVISRSPQSTRTPQATRL.

The protein belongs to the SLX4 family. Forms a heterodimer with SLX1. Post-translationally, phosphorylated in response to DNA damage.

The protein localises to the nucleus. Functionally, regulatory subunit of the SLX1-SLX4 structure-specific endonuclease that resolves DNA secondary structures generated during DNA repair and recombination. Has endonuclease activity towards branched DNA substrates, introducing single-strand cuts in duplex DNA close to junctions with ss-DNA. The chain is Structure-specific endonuclease subunit SLX4 from Vanderwaltozyma polyspora (strain ATCC 22028 / DSM 70294 / BCRC 21397 / CBS 2163 / NBRC 10782 / NRRL Y-8283 / UCD 57-17) (Kluyveromyces polysporus).